Consider the following 288-residue polypeptide: HTH-type transcriptional regulator CzcR (288 aa).

Positions 1-58 (MELRDLQIFKCVAHHKSITGAAKELNYVQSNVTARIKQLENELKTPLFNRHKKGVSLS) constitute an HTH lysR-type domain. The segment at residues 18–37 (ITGAAKELNYVQSNVTARIK) is a DNA-binding region (H-T-H motif).

This sequence belongs to the LysR transcriptional regulatory family.

The sequence is that of HTH-type transcriptional regulator CzcR (czcR) from Bacillus subtilis (strain 168).